Reading from the N-terminus, the 423-residue chain is Alpha-1-antichymotrypsin (423 aa).

The signal sequence occupies residues 1–23; sequence MERMLPFLALGLLVAGFCPAVLC. N-linked (GlcNAc...) asparagine glycans are attached at residues N93, N106, N127, N186, and N271. The segment at 369–394 is RCL; sequence GTEASAATAVKITLLSALVDPMTIVR.

This sequence belongs to the serpin family. As to quaternary structure, interacts with DNAJC1. As to expression, plasma.

The protein resides in the secreted. Functionally, although its physiological function is unclear, it can inhibit neutrophil cathepsin G and mast cell chymase, both of which can convert angiotensin-1 to the active angiotensin-2. This Pongo abelii (Sumatran orangutan) protein is Alpha-1-antichymotrypsin (SERPINA3).